Consider the following 92-residue polypeptide: DNA-directed RNA polymerase subunit Rpo11 (92 aa).

Belongs to the archaeal Rpo11/eukaryotic RPB11/RPC19 RNA polymerase subunit family. As to quaternary structure, part of the RNA polymerase complex.

Its subcellular location is the cytoplasm. It carries out the reaction RNA(n) + a ribonucleoside 5'-triphosphate = RNA(n+1) + diphosphate. In terms of biological role, DNA-dependent RNA polymerase (RNAP) catalyzes the transcription of DNA into RNA using the four ribonucleoside triphosphates as substrates. The polypeptide is DNA-directed RNA polymerase subunit Rpo11 (Methanosarcina mazei (strain ATCC BAA-159 / DSM 3647 / Goe1 / Go1 / JCM 11833 / OCM 88) (Methanosarcina frisia)).